A 174-amino-acid chain; its full sequence is Peptide methionine sulfoxide reductase MsrA (174 aa).

The active site involves C11.

It belongs to the MsrA Met sulfoxide reductase family.

The catalysed reaction is L-methionyl-[protein] + [thioredoxin]-disulfide + H2O = L-methionyl-(S)-S-oxide-[protein] + [thioredoxin]-dithiol. It carries out the reaction [thioredoxin]-disulfide + L-methionine + H2O = L-methionine (S)-S-oxide + [thioredoxin]-dithiol. Has an important function as a repair enzyme for proteins that have been inactivated by oxidation. Catalyzes the reversible oxidation-reduction of methionine sulfoxide in proteins to methionine. This chain is Peptide methionine sulfoxide reductase MsrA, found in Haloquadratum walsbyi (strain DSM 16790 / HBSQ001).